The primary structure comprises 243 residues: Venom nerve growth factor 1 (243 aa).

The signal sequence occupies residues 1–18; it reads MSMLCYTLIIAFLIGIWA. The propeptide occupies 19 to 125; the sequence is APKSEDNVPL…TLNRNIRAKR (107 aa). The span at 47 to 66 shows a compositional bias: basic and acidic residues; it reads GLKTSRNTDQRHPAPKKAED. Positions 47 to 69 are disordered; the sequence is GLKTSRNTDQRHPAPKKAEDQEL. Disulfide bonds link Cys139–Cys204, Cys182–Cys232, and Cys192–Cys234. Asn148 is a glycosylation site (N-linked (GlcNAc...) asparagine).

The protein belongs to the NGF-beta family. Homodimer; non-covalently linked. As to expression, expressed by the venom gland.

It is found in the secreted. Functionally, nerve growth factor is important for the development and maintenance of the sympathetic and sensory nervous systems. It stimulates division and differentiation of sympathetic and embryonic sensory neurons as well as basal forebrain cholinergic neurons in the brain. Its relevance in the snake venom is not clear. However, it has been shown to inhibit metalloproteinase-dependent proteolysis of platelet glycoprotein Ib alpha, suggesting a metalloproteinase inhibition to prevent metalloprotease autodigestion and/or protection against prey proteases. Binds a lipid between the two protein chains in the homodimer. The lipid-bound form promotes histamine relase from mouse mast cells, contrary to the lipid-free form. The protein is Venom nerve growth factor 1 of Oxyuranus microlepidotus (Inland taipan).